The following is a 334-amino-acid chain: HTH-type transcriptional repressor PurR (334 aa).

The HTH lacI-type domain occupies 2–56 (ATIKDVARLAGVSTTTVSHVINKTRFVAEATQEKVMKAVDELNYAPSAVARSLKC). A DNA-binding region (H-T-H motif) is located at residues 4 to 23 (IKDVARLAGVSTTTVSHVIN). Residues 48–56 (SAVARSLKC) mediate DNA binding. 4 residues coordinate hypoxanthine: Phe73, Lys189, Phe220, and Asp274.

As to quaternary structure, homodimer.

It functions in the pathway purine metabolism; purine nucleotide biosynthesis [regulation]. Functionally, is the main repressor of the genes involved in the de novo synthesis of purine nucleotides, regulating purB, purC, purEK, purF, purHD, purL, purMN and guaBA expression. PurR is allosterically activated to bind its cognate DNA by binding the purine corepressors, hypoxanthine or guanine, thereby effecting transcription repression. The chain is HTH-type transcriptional repressor PurR from Vibrio vulnificus (strain CMCP6).